A 94-amino-acid chain; its full sequence is Small ubiquitin-related modifier 3 (94 aa).

Residue K11 forms a Glycyl lysine isopeptide (Lys-Gly) (interchain with G-Cter in SUMO) linkage. In terms of domain architecture, Ubiquitin-like spans 15 to 92 (DHINLKVAGQ…IDVFQQQTGG (78 aa)). A Glycyl lysine isopeptide (Gly-Lys) (interchain with K-? in acceptor proteins) cross-link involves residue G92. Residues 93-94 (LC) constitute a propeptide that is removed on maturation.

The protein belongs to the ubiquitin family. SUMO subfamily. Interacts with SAE2 and UBE2I. Covalently attached to a number of proteins. In terms of processing, polymeric chains can be formed through Lys-11 cross-linking. Post-translationally, cleavage of precursor form by a sentrin-specific protease is necessary for function.

The protein resides in the cytoplasm. It is found in the nucleus. The protein localises to the PML body. Its function is as follows. Ubiquitin-like protein which can be covalently attached to target lysines either as a monomer or as a lysine-linked polymer. Does not seem to be involved in protein degradation and may function as an antagonist of ubiquitin in the degradation process. Plays a role in a number of cellular processes such as nuclear transport, DNA replication and repair, mitosis and signal transduction. Covalent attachment to its substrates requires prior activation by the E1 complex SAE1-SAE2 and linkage to the E2 enzyme UBE2I. The sequence is that of Small ubiquitin-related modifier 3 from Gallus gallus (Chicken).